Here is a 725-residue protein sequence, read N- to C-terminus: Endoglucanase G (725 aa).

An N-terminal signal peptide occupies residues 1-35; sequence MLKTKRKLTKAIGVALSISILSSLVSFIPQTNTYA. Catalysis depends on D93, which acts as the Nucleophile. Catalysis depends on residues H408, D446, and E455. The CBM3 domain maps to 489–650; it reads ITNDEVIIKA…GVKVFGNEPA (162 aa). The 67-residue stretch at 658-724 folds into the Dockerin domain; it reads PEILYGDVNS…LLGTITQLPQ (67 aa).

It belongs to the glycosyl hydrolase 9 (cellulase E) family.

It catalyses the reaction Endohydrolysis of (1-&gt;4)-beta-D-glucosidic linkages in cellulose, lichenin and cereal beta-D-glucans.. Its pathway is glycan metabolism; cellulose degradation. Its function is as follows. The biological conversion of cellulose to glucose generally requires three types of hydrolytic enzymes: (1) Endoglucanases which cut internal beta-1,4-glucosidic bonds; (2) Exocellobiohydrolases that cut the disaccharide cellobiose from the non-reducing end of the cellulose polymer chain; (3) Beta-1,4-glucosidases which hydrolyze the cellobiose and other short cello-oligosaccharides to glucose. The chain is Endoglucanase G (celCCG) from Ruminiclostridium cellulolyticum (strain ATCC 35319 / DSM 5812 / JCM 6584 / H10) (Clostridium cellulolyticum).